The primary structure comprises 395 residues: Elongation factor Tu (395 aa).

In terms of domain architecture, tr-type G spans 10–205 (KVHMNVGTIG…AMDSYFEDPV (196 aa)). Residues 19 to 26 (GHVDHGKT) are G1. Residue 19 to 26 (GHVDHGKT) participates in GTP binding. Residue T26 coordinates Mg(2+). The tract at residues 60-64 (GITIN) is G2. The interval 81–84 (DCPG) is G3. Residues 81-85 (DCPGH) and 136-139 (NKVD) each bind GTP. Residues 136 to 139 (NKVD) form a G4 region. The segment at 173–175 (SAF) is G5.

This sequence belongs to the TRAFAC class translation factor GTPase superfamily. Classic translation factor GTPase family. EF-Tu/EF-1A subfamily. In terms of assembly, monomer.

Its subcellular location is the cytoplasm. The catalysed reaction is GTP + H2O = GDP + phosphate + H(+). In terms of biological role, GTP hydrolase that promotes the GTP-dependent binding of aminoacyl-tRNA to the A-site of ribosomes during protein biosynthesis. The polypeptide is Elongation factor Tu (Treponema pallidum (strain Nichols)).